The chain runs to 253 residues: Triosephosphate isomerase, cytosolic (253 aa).

Substrate is bound by residues N10 and K12. Residue H96 is the Electrophile of the active site. E166 acts as the Proton acceptor in catalysis.

This sequence belongs to the triosephosphate isomerase family. As to quaternary structure, homodimer.

Its subcellular location is the cytoplasm. It catalyses the reaction D-glyceraldehyde 3-phosphate = dihydroxyacetone phosphate. Its pathway is carbohydrate biosynthesis; gluconeogenesis. It functions in the pathway carbohydrate degradation; glycolysis; D-glyceraldehyde 3-phosphate from glycerone phosphate: step 1/1. This is Triosephosphate isomerase, cytosolic (TPI) from Oryza sativa subsp. japonica (Rice).